A 1450-amino-acid polypeptide reads, in one-letter code: DNA-directed RNA polymerase RPB1 homolog (1450 aa).

It belongs to the RNA polymerase beta' chain family. In terms of assembly, part of the viral DNA-directed RNA polymerase that consists of 8 polII-like subunits (RPB1, RPB2, RPB3, RPB5, RPB6, RPB7, RPB9, RPB10), a capping enzyme and a termination factor.

The protein localises to the virion. It catalyses the reaction RNA(n) + a ribonucleoside 5'-triphosphate = RNA(n+1) + diphosphate. Its function is as follows. Catalytic component of the DNA-directed RNA polymerase (RNAP) that catalyzes the transcription in the cytoplasm of viral DNA into RNA using the four ribonucleoside triphosphates as substrates. Forms the polymerase active center together with RPB2. Part of the core element with the central large cleft, the clamp element that moves to open and close the cleft and the jaws that are thought to grab the incoming DNA template. The sequence is that of DNA-directed RNA polymerase RPB1 homolog from African swine fever virus (isolate Warthog/Namibia/Wart80/1980) (ASFV).